We begin with the raw amino-acid sequence, 302 residues long: Glutaminase (302 aa).

Residues Ser-61, Asn-111, Glu-155, Asn-162, Tyr-186, Tyr-238, and Val-256 each coordinate substrate.

Belongs to the glutaminase family. In terms of assembly, homotetramer.

The catalysed reaction is L-glutamine + H2O = L-glutamate + NH4(+). This is Glutaminase from Pseudomonas paraeruginosa (strain DSM 24068 / PA7) (Pseudomonas aeruginosa (strain PA7)).